Reading from the N-terminus, the 367-residue chain is Isocitrate dehydrogenase [NAD] regulatory subunit 1, mitochondrial (367 aa).

A mitochondrion-targeting transit peptide spans 1-25; that stretch reads MSRRSLTLLKNLARNANGSGIQTRS.

Belongs to the isocitrate and isopropylmalate dehydrogenases family. In terms of assembly, heterooligomer of catalytic and regulatory subunits. Ubiquitous. Predominantly expressed in roots, stems and leaves.

The protein localises to the mitochondrion. Performs an essential role in the oxidative function of the citric acid cycle. This Arabidopsis thaliana (Mouse-ear cress) protein is Isocitrate dehydrogenase [NAD] regulatory subunit 1, mitochondrial (IDH1).